Consider the following 272-residue polypeptide: S-adenosylmethionine decarboxylase proenzyme (272 aa).

The active-site Schiff-base intermediate with substrate; via pyruvic acid is S122. Position 122 is a pyruvic acid (Ser); by autocatalysis (S122). Catalysis depends on H127, which acts as the Proton acceptor; for processing activity. The active-site Proton donor; for catalytic activity is the C150.

Belongs to the prokaryotic AdoMetDC family. Type 2 subfamily. As to quaternary structure, heterooctamer of four alpha and four beta chains arranged as a tetramer of alpha/beta heterodimers. The cofactor is pyruvate. Is synthesized initially as an inactive proenzyme. Formation of the active enzyme involves a self-maturation process in which the active site pyruvoyl group is generated from an internal serine residue via an autocatalytic post-translational modification. Two non-identical subunits are generated from the proenzyme in this reaction, and the pyruvate is formed at the N-terminus of the alpha chain, which is derived from the carboxyl end of the proenzyme. The post-translation cleavage follows an unusual pathway, termed non-hydrolytic serinolysis, in which the side chain hydroxyl group of the serine supplies its oxygen atom to form the C-terminus of the beta chain, while the remainder of the serine residue undergoes an oxidative deamination to produce ammonia and the pyruvoyl group blocking the N-terminus of the alpha chain.

The catalysed reaction is S-adenosyl-L-methionine + H(+) = S-adenosyl 3-(methylsulfanyl)propylamine + CO2. Its pathway is amine and polyamine biosynthesis; S-adenosylmethioninamine biosynthesis; S-adenosylmethioninamine from S-adenosyl-L-methionine: step 1/1. Its function is as follows. Catalyzes the decarboxylation of S-adenosylmethionine to S-adenosylmethioninamine (dcAdoMet), the propylamine donor required for the synthesis of the polyamines spermine and spermidine from the diamine putrescine. This is S-adenosylmethionine decarboxylase proenzyme from Clostridium botulinum (strain Eklund 17B / Type B).